We begin with the raw amino-acid sequence, 418 residues long: Tektin-1 (418 aa).

Coiled coils occupy residues 20-107 (NKSQ…SYKE), 134-177 (QELQ…DLRD), 266-308 (NGLK…QQEG), and 332-383 (IAQY…ENTI).

This sequence belongs to the tektin family. In terms of assembly, microtubule inner protein component of sperm flagellar doublet microtubules. Ubiquitinated, leading to its degradation. Deubiquitinated by USP16, promoting its stability.

It localises to the cytoplasm. The protein resides in the cytoskeleton. The protein localises to the cilium axoneme. Its subcellular location is the flagellum axoneme. In terms of biological role, microtubule inner protein (MIP) part of the dynein-decorated doublet microtubules (DMTs) in cilia and flagellar axoneme. Forms filamentous polymers in the walls of ciliary and flagellar microtubules. This Mus musculus (Mouse) protein is Tektin-1 (Tekt1).